The sequence spans 159 residues: Oleosin Cor a 12 (159 aa).

The segment covering 1 to 10 (MADRPQQLQV) has biased composition (polar residues). A disordered region spans residues 1-24 (MADRPQQLQVHPQRGHGHYEGGIK). 3 helical membrane passes run 45–65 (VGGT…IGLL), 70–90 (LFII…LAVA), and 92–112 (FLSS…VLNY).

The protein belongs to the oleosin family. Expressed in seeds.

It is found in the lipid droplet. The protein resides in the membrane. In terms of biological role, may have a structural role to stabilize the lipid body during desiccation of the seed by preventing coalescence of the oil. Probably interacts with both lipid and phospholipid moieties of lipid bodies. May also provide recognition signals for specific lipase anchorage in lipolysis during seedling growth. This Corylus avellana (European hazel) protein is Oleosin Cor a 12.